We begin with the raw amino-acid sequence, 169 residues long: ATP-dependent Clp protease adapter protein CLPS2, chloroplastic (169 aa).

Residues 1 to 33 (MLATRCKCNLPSRSFVAPARSVRTRALHVEGRF) constitute a chloroplast transit peptide. The interval 67 to 92 (DAKTDNGNNGSNTDKDKKSPPGGGNY) is disordered.

Belongs to the ClpS family.

It is found in the plastid. The protein resides in the chloroplast stroma. Functionally, small adapter protein that modulate the activity of plastid Clp protease system (CLPC). Probably involved in substrate selection for plastid CLPC. This is ATP-dependent Clp protease adapter protein CLPS2, chloroplastic from Chlamydomonas reinhardtii (Chlamydomonas smithii).